The sequence spans 518 residues: 3-octaprenyl-4-hydroxybenzoate carboxy-lyase (518 aa).

Asn177 provides a ligand contact to Mn(2+). Prenylated FMN is bound by residues 180–182, 194–196, and 199–200; these read IYR, RWL, and RG. Glu243 is a Mn(2+) binding site. The active-site Proton donor is the Asp318.

The protein belongs to the UbiD family. Homohexamer. Prenylated FMN is required as a cofactor. Requires Mn(2+) as cofactor.

The protein resides in the cell membrane. The enzyme catalyses a 4-hydroxy-3-(all-trans-polyprenyl)benzoate + H(+) = a 2-(all-trans-polyprenyl)phenol + CO2. The protein operates within cofactor biosynthesis; ubiquinone biosynthesis. In terms of biological role, catalyzes the decarboxylation of 3-octaprenyl-4-hydroxy benzoate to 2-octaprenylphenol, an intermediate step in ubiquinone biosynthesis. The chain is 3-octaprenyl-4-hydroxybenzoate carboxy-lyase from Burkholderia multivorans (strain ATCC 17616 / 249).